We begin with the raw amino-acid sequence, 816 residues long: H(+)/Cl(-) exchange transporter 5 (816 aa).

The interval 1 to 26 (MAMWQGAMDNRGFQQGSFSSFQNSSS) is disordered. Residues 1–124 (MAMWQGAMDN…WALIHSVSDA (124 aa)) are Cytoplasmic-facing. A compositionally biased stretch (low complexity) spans 12 to 25 (GFQQGSFSSFQNSS). 2 helical membrane-spanning segments follow: residues 125-162 (FSGW…ICTG) and 208-231 (VNYF…VKVF). The Selectivity filter part_1 motif lies at 237–241 (GSGIP). S238 serves as a coordination point for chloride. An intramembrane region (helical) is located at residues 240 to 247 (IPEIKTIL). 2 helical membrane passes run 256–275 (LGKW…VSSG) and 281–300 (EGPL…HCFN). A Selectivity filter part_2 motif is present at residues 279–283 (GKEGP). Intramembrane regions (helical) lie at residues 312–324 (VLSA…VSVA) and 328–336 (PIGGVLFSL). 5 helical membrane-spanning segments follow: residues 348 to 366 (LWRS…RSIN), 389 to 415 (LVPF…AWCR), 422 to 442 (LGKY…ILAF), 498 to 518 (MWQL…TFGM), and 523 to 542 (GLFI…LGVG). The Selectivity filter part_3 motif lies at 523-527 (GLFIP). F525 contributes to the chloride binding site. Positions 570–584 (GLYAMVGAAACLGGV) form an intramembrane region, helical. Residues 585 to 587 (TRM) constitute an intramembrane region (note=Loop between two helices). Positions 588 to 599 (TVSLVVIMFELT) form an intramembrane region, helical. The segment at residues 600 to 604 (GGLEY) is an intramembrane region (note=Loop between two helices). A helical membrane pass occupies residues 605 to 622 (IVPLMAAAMTSKWVADAL). Residues 623–816 (GREGIYDAHI…NQDPDSILFN (194 aa)) are Cytoplasmic-facing. Y628 lines the chloride pocket. 2 consecutive CBS domains span residues 656 to 720 (MKPR…ARKK) and 752 to 812 (ILDL…DPDS). ATP-binding positions include T666, 687–689 (YSG), and 794–797 (TKKD).

It belongs to the chloride channel (TC 2.A.49) family. ClC-5/CLCN5 subfamily. In terms of assembly, interacts with NEDD4 and NEDD4L. In terms of processing, ubiquitinated by NEDD4L in the presence of albumin; which promotes endocytosis and proteasomal degradation. In terms of tissue distribution, kidney. Moderately expressed in aortic vascular smooth muscle and endothelial cells, and at a slightly higher level in the coronary vascular smooth muscle.

The protein localises to the golgi apparatus membrane. Its subcellular location is the endosome membrane. The protein resides in the cell membrane. The catalysed reaction is 2 chloride(in) + H(+)(out) = 2 chloride(out) + H(+)(in). In terms of biological role, proton-coupled chloride transporter. Functions as antiport system and exchanges chloride ions against protons. Important for normal acidification of the endosome lumen. May play an important role in renal tubular function. The CLC channel family contains both chloride channels and proton-coupled anion transporters that exchange chloride or another anion for protons. The absence of conserved gating glutamate residues is typical for family members that function as channels. The polypeptide is H(+)/Cl(-) exchange transporter 5 (Homo sapiens (Human)).